We begin with the raw amino-acid sequence, 44 residues long: Alpha-amylase inhibitor helianthamide (44 aa).

Cystine bridges form between Cys-6–Cys-38, Cys-16–Cys-33, and Cys-20–Cys-39. The segment at 7 to 10 (YIYH) is inhibitory motif.

It belongs to the sea anemone alpha-amylase inhibitor family.

It localises to the secreted. In terms of biological role, specific pancreatic alpha-amylase (AMY2A) inhibitor. The recombinant peptide inhibits human pancreatic (Ki=0.01 nM) and porcine pancreatic alpha-amylases (Ki=0.1 nM). This chain is Alpha-amylase inhibitor helianthamide, found in Stichodactyla helianthus (Sun anemone).